The primary structure comprises 175 residues: Lipoprotein signal peptidase (175 aa).

4 consecutive transmembrane segments (helical) span residues 25 to 45 (LWMA…IVIV), 56 to 76 (VTGF…SFLA), 81 to 101 (WQRW…VWLL), and 110 to 130 (FCFA…DRVV). Active-site residues include Asp136 and Asp154. The helical transmembrane segment at 146–166 (HWPAFNVADCAITVGAVLLIV) threads the bilayer.

This sequence belongs to the peptidase A8 family.

The protein localises to the cell inner membrane. It carries out the reaction Release of signal peptides from bacterial membrane prolipoproteins. Hydrolyzes -Xaa-Yaa-Zaa-|-(S,diacylglyceryl)Cys-, in which Xaa is hydrophobic (preferably Leu), and Yaa (Ala or Ser) and Zaa (Gly or Ala) have small, neutral side chains.. It functions in the pathway protein modification; lipoprotein biosynthesis (signal peptide cleavage). Functionally, this protein specifically catalyzes the removal of signal peptides from prolipoproteins. In Cupriavidus necator (strain ATCC 17699 / DSM 428 / KCTC 22496 / NCIMB 10442 / H16 / Stanier 337) (Ralstonia eutropha), this protein is Lipoprotein signal peptidase.